An 879-amino-acid polypeptide reads, in one-letter code: Prostaglandin F2 receptor negative regulator (879 aa).

The signal sequence occupies residues 1–21 (MGRPAPRPLLLALLSLAVCRG). Ig-like C2-type domains follow at residues 22 to 137 (RVVR…DTVQ) and 149 to 263 (PSSR…QEIQ). Topologically, residues 22 to 832 (RVVRVPAGTL…MDVLNAFKYP (811 aa)) are extracellular. 2 cysteine pairs are disulfide-bonded: C43–C119 and C169–C247. N44 is a glycosylation site (N-linked (GlcNAc...) asparagine). The short motif at 89 to 91 (RGD) is the Cell attachment site element. Phosphothreonine is present on T271. 4 Ig-like C2-type domains span residues 276–389 (PTAL…WHKV), 406–536 (PEYQ…DVFS), 544–662 (ASED…AWSP), and 688–813 (PTFN…AEIH). A disulfide bridge connects residues C299 and C373. N-linked (GlcNAc...) asparagine glycans are attached at residues N300, N383, and N413. An Endoplasmic reticulum retention signal motif is present at residues 424–427 (PTEL). An intrachain disulfide couples C429 to C515. N525, N600, N618, and N691 each carry an N-linked (GlcNAc...) asparagine glycan. C571 and C655 are oxidised to a cystine. Residues 703 to 705 (RGD) carry the Cell attachment site motif. Residues C711 and C793 are joined by a disulfide bond. Residues 833-853 (LLIGVGLSTVIGLLSCLIGYC) form a helical membrane-spanning segment. Topologically, residues 854–879 (SSHWCCKKEVRETRRERRRLMSMEMD) are cytoplasmic.

As to quaternary structure, interacts with CD9 and CD81. Part of a complex composed of CD9, CD81 and IGSF8. Also seems to interact with CD63, CD82 and CD151. Expressed in myoblasts (at protein level).

It is found in the endoplasmic reticulum membrane. Its subcellular location is the golgi apparatus. The protein resides in the trans-Golgi network membrane. Its function is as follows. Inhibits the binding of prostaglandin F2-alpha (PGF2-alpha) to its specific FP receptor, by decreasing the receptor number rather than the affinity constant. Functional coupling with the prostaglandin F2-alpha receptor seems to occur. In myoblasts, associates with tetraspanins CD9 and CD81 to prevent myotube fusion during muscle regeneration. The chain is Prostaglandin F2 receptor negative regulator (Ptgfrn) from Mus musculus (Mouse).